We begin with the raw amino-acid sequence, 526 residues long: DNA polymerase epsilon subunit B (526 aa).

It belongs to the DNA polymerase epsilon subunit B family. As to quaternary structure, subunit of the DNA polymerase II. Interacts with POL2A (via C-terminus).

It localises to the nucleus. As accessory component of DNA polymerase II participates in chromosomal DNA replication. Required for the timing and determination of cell fate during plant embryogenesis and root pole development, by promoting cell cycle and cell type patterning. Necessary for proper shoot (SAM) and root apical meristem (RAM) functions. Is essential to promote the first divisions of the zygote. This Arabidopsis thaliana (Mouse-ear cress) protein is DNA polymerase epsilon subunit B.